We begin with the raw amino-acid sequence, 421 residues long: Fumarylacetoacetase (421 aa).

D131 lines the Ca(2+) pocket. The active-site Proton acceptor is H138. R147 lines the substrate pocket. Residues E204, E206, and D238 each contribute to the Ca(2+) site. Residue D238 coordinates Mg(2+). 2 residues coordinate substrate: Q245 and Y249. Residues K258 and T262 each contribute to the Mg(2+) site. T355 lines the substrate pocket.

It belongs to the FAH family. It depends on Ca(2+) as a cofactor. Mg(2+) serves as cofactor.

It catalyses the reaction 4-fumarylacetoacetate + H2O = acetoacetate + fumarate + H(+). It functions in the pathway amino-acid degradation; L-phenylalanine degradation; acetoacetate and fumarate from L-phenylalanine: step 6/6. In terms of biological role, converts fumarylacetoacetate to acetoacetate and fumarate. Involved in tyrosine catabolic pathway. Catalyzes the final step in the tyrosine degradation pathway. The chain is Fumarylacetoacetase from Arabidopsis thaliana (Mouse-ear cress).